The sequence spans 237 residues: Histone H1E (237 aa).

Low complexity predominate over residues 1 to 21 (MSDPAQEVEAPVEAAPVASSP). Disordered stretches follow at residues 1–56 (MSDP…PVSE) and 109–237 (LQAK…KKAK). A compositionally biased stretch (basic and acidic residues) spans 26–42 (EKAPKAPKAEKPKSDKP). Positions 50 to 124 (THPPVSEMVV…GASGSFKLPP (75 aa)) constitute an H15 domain. Positions 182-195 (AKPAAKKAAAPKPK) are enriched in low complexity. Positions 200 to 209 (PKKEVKPKKE) are enriched in basic and acidic residues. Positions 210 to 237 (AKPKKAAAKPAKKPAAKPAKKPAAKKAK) are enriched in basic residues.

The protein belongs to the histone H1/H5 family.

Its subcellular location is the nucleus. The protein resides in the chromosome. Histones H1 are necessary for the condensation of nucleosome chains into higher-order structures. In Chironomus tentans (Midge), this protein is Histone H1E.